The sequence spans 650 residues: Tudor domain-containing protein 3 (650 aa).

Residues 147-169 are disordered; it reads TKTFGGGGNAGSNLNPGAGGSRN. In terms of domain architecture, UBA spans 192-232; sequence LVDEKALRHITEMGFCKDAARQALMDHSNNVEAALNFLLTG. Disordered regions lie at residues 233–271, 286–406, and 427–447; these read SKPK…APST, EDNK…SCNN, and HQNS…DQRY. Basic and acidic residues-rich tracts occupy residues 320-337 and 366-388; these read TRND…RFQK and HWME…KDFS. Over residues 390-406 the composition is skewed to polar residues; sequence PPSNHQNEGSYRKSCNN. The Tudor domain occupies 554 to 614; sequence SWRSGDECLA…RPIQAEAWEE (61 aa). Positions 616 to 650 are disordered; the sequence is GEFGDSLDFRRGGDGQPRRSTRPTQQFYQPPRARN. A compositionally biased stretch (basic and acidic residues) spans 622–632; the sequence is LDFRRGGDGQP.

Component of mRNA stress granules.

The protein resides in the cytoplasm. It is found in the nucleus. In terms of biological role, scaffolding protein that specifically recognizes and binds dimethylarginine-containing proteins. Plays a role in the regulation of translation of target mRNAs by binding Arg/Gly-rich motifs (GAR) in dimethylarginine-containing proteins. In nucleus, acts as a coactivator: recognizes and binds asymmetric dimethylation on the core histone tails associated with transcriptional activation (H3R17me2a and H4R3me2a) and recruits proteins at these arginine-methylated loci. In cytoplasm, acts as an antiviral factor that participates in the assembly of stress granules together with G3BP1. The protein is Tudor domain-containing protein 3 (tdrd3) of Xenopus laevis (African clawed frog).